We begin with the raw amino-acid sequence, 49 residues long: Large ribosomal subunit protein bL33A (49 aa).

The interval 20 to 49 (KKNKRNNPDRVEFKKYCPRDKKSTLHRETK) is disordered. Over residues 25 to 49 (NNPDRVEFKKYCPRDKKSTLHRETK) the composition is skewed to basic and acidic residues.

This sequence belongs to the bacterial ribosomal protein bL33 family. In terms of assembly, part of the 50S ribosomal subunit. Interacts with VmlR.

In Bacillus subtilis (strain 168), this protein is Large ribosomal subunit protein bL33A (rpmGA).